The following is a 323-amino-acid chain: Extracellular endo-alpha-(1-&gt;5)-L-arabinanase 1 (323 aa).

An N-terminal signal peptide occupies residues 1–32 (MKKKKTWKRFLHFSSAALAAGLIFTSAAPAEA). Residue aspartate 44 is the Proton acceptor of the active site. Aspartate 44 provides a ligand contact to substrate. Aspartate 107 provides a ligand contact to Ca(2+). Substrate is bound by residues glycine 125 and 160–163 (NAID). Ca(2+) is bound at residue glutamate 165. Position 180 to 182 (180 to 182 (SFW)) interacts with substrate. The active-site Proton donor is glutamate 215. Aspartate 287 lines the Ca(2+) pocket.

The protein belongs to the glycosyl hydrolase 43 family. Requires Ca(2+) as cofactor.

The protein localises to the secreted. It carries out the reaction Endohydrolysis of (1-&gt;5)-alpha-arabinofuranosidic linkages in (1-&gt;5)-arabinans.. It participates in glycan metabolism; L-arabinan degradation. Involved in the degradation of arabinan and is a key enzyme in the complete degradation of the plant cell wall. Catalyzes the internal cleavage of alpha-(1-&gt;5)-L-arabinofuranosyl residues of linear 1,5-alpha-L-arabinan and of branched sugar beet arabinan. It displays no activity against heavily substituted arabinans or a range of other polysaccharides (larch wood arabinogalactan, wheat arabinoxylan and p-nitrophenyl-alpha-L-arabinofuranoside). The enzyme activity is progressively reduced as alpha-(1-&gt;5)-chains become shorter or more highly substituted. This Bacillus subtilis (strain 168) protein is Extracellular endo-alpha-(1-&gt;5)-L-arabinanase 1 (abnA).